Reading from the N-terminus, the 87-residue chain is Cell division topological specificity factor (87 aa).

The protein belongs to the MinE family.

Functionally, prevents the cell division inhibition by proteins MinC and MinD at internal division sites while permitting inhibition at polar sites. This ensures cell division at the proper site by restricting the formation of a division septum at the midpoint of the long axis of the cell. The sequence is that of Cell division topological specificity factor from Roseiflexus sp. (strain RS-1).